We begin with the raw amino-acid sequence, 272 residues long: MLNLNELKSGFHYFVMGWHFITQKGLRRFVIMPIVLNTVLLCGLFWLFISQISSAIDWVMNFIPDWLSFLSVILLILSILTILLLFYFTFTTISGFIAAPFNGLLAEKVEKMLTGENINDDGLVDIMRDVPRMLAREWQKLRYSLPKIIALFLLSFIPLVGQTIVPVLTFLFTCWMMAIQYCDYPFDNHKVSFDIMKNVLGNQRTQSLTFGGLVTCCTFVPVINLLIMPVAVCGATLMWVENYRNDLGFNMNKSFSSQTGLDVRSENTGIVK.

Transmembrane regions (helical) follow at residues 29–49 (FVIM…WLFI), 66–86 (WLSF…LLLF), 148–168 (IIAL…VPVL), and 219–239 (FVPV…TLMW).

The protein belongs to the CysZ family.

The protein localises to the cell inner membrane. Functionally, high affinity, high specificity proton-dependent sulfate transporter, which mediates sulfate uptake. Provides the sulfur source for the cysteine synthesis pathway. In Haemophilus influenzae (strain ATCC 51907 / DSM 11121 / KW20 / Rd), this protein is Sulfate transporter CysZ.